The chain runs to 30 residues: Natriuretic peptides A (30 aa).

The propeptide occupies 1–3 (APR). A disulfide bridge links Cys11 with Cys27.

It belongs to the natriuretic peptide family. Cleaved upon secretion to produce the functional hormone.

The protein localises to the secreted. Its function is as follows. Hormone playing a key role in cardiovascular homeostasis through regulation of natriuresis, diuresis, and vasodilation. Has a cGMP-stimulating activity. The protein is Natriuretic peptides A of Pelophylax ridibundus (Marsh frog).